Consider the following 265-residue polypeptide: Acyl-[acyl-carrier-protein]--UDP-N-acetylglucosamine O-acyltransferase (265 aa).

The protein belongs to the transferase hexapeptide repeat family. LpxA subfamily. Homotrimer.

It is found in the cytoplasm. The catalysed reaction is a (3R)-hydroxyacyl-[ACP] + UDP-N-acetyl-alpha-D-glucosamine = a UDP-3-O-[(3R)-3-hydroxyacyl]-N-acetyl-alpha-D-glucosamine + holo-[ACP]. The protein operates within glycolipid biosynthesis; lipid IV(A) biosynthesis; lipid IV(A) from (3R)-3-hydroxytetradecanoyl-[acyl-carrier-protein] and UDP-N-acetyl-alpha-D-glucosamine: step 1/6. Functionally, involved in the biosynthesis of lipid A, a phosphorylated glycolipid that anchors the lipopolysaccharide to the outer membrane of the cell. The chain is Acyl-[acyl-carrier-protein]--UDP-N-acetylglucosamine O-acyltransferase from Polynucleobacter asymbioticus (strain DSM 18221 / CIP 109841 / QLW-P1DMWA-1) (Polynucleobacter necessarius subsp. asymbioticus).